The sequence spans 1120 residues: Hachiman protein HamB (1120 aa).

The Helicase ATP-binding domain occupies 278–452 (DGELLKNDGF…WIGEDDKAKR (175 aa)). 291-298 (MPTSSGKT) is a binding site for ATP. The DEAH box motif lies at 395-398 (DEGH). Residues 521-710 (ATATKMLDVG…NIEKATSGLY (190 aa)) form the Helicase C-terminal domain.

The protein belongs to the helicase family.

Functionally, component of antiviral defense system Hachiman, composed of HamA and HamB. Expression of Hachiman in B.subtilis (strain BEST7003) confers resistance to phages phi105, phi29, phi3T, rho14, SBSphiJ, SpBeta and SPR. Probably a helicase. This is Hachiman protein HamB from Bacillus cereus.